The sequence spans 152 residues: Large ribosomal subunit protein bL9 (152 aa).

This sequence belongs to the bacterial ribosomal protein bL9 family.

Functionally, binds to the 23S rRNA. The polypeptide is Large ribosomal subunit protein bL9 (Thermosynechococcus vestitus (strain NIES-2133 / IAM M-273 / BP-1)).